A 323-amino-acid polypeptide reads, in one-letter code: Thiamine-monophosphate kinase (323 aa).

Positions 30, 45, 46, and 47 each coordinate Mg(2+). H54 contacts substrate. Mg(2+) is bound by residues D75 and D122. Residues 121-122 (GD) and R146 each bind ATP. D212 serves as a coordination point for Mg(2+). An ATP-binding site is contributed by S214. Mg(2+) is bound at residue D215. The substrate site is built by E263 and F319.

Belongs to the thiamine-monophosphate kinase family.

The catalysed reaction is thiamine phosphate + ATP = thiamine diphosphate + ADP. The protein operates within cofactor biosynthesis; thiamine diphosphate biosynthesis; thiamine diphosphate from thiamine phosphate: step 1/1. In terms of biological role, catalyzes the ATP-dependent phosphorylation of thiamine-monophosphate (TMP) to form thiamine-pyrophosphate (TPP), the active form of vitamin B1. The polypeptide is Thiamine-monophosphate kinase (Buchnera aphidicola subsp. Acyrthosiphon pisum (strain APS) (Acyrthosiphon pisum symbiotic bacterium)).